A 549-amino-acid polypeptide reads, in one-letter code: Threonine--tRNA ligase catalytic subunit (549 aa).

The tract at residues 142 to 437 (DHRIIGDRLD…LLEHFRGKLP (296 aa)) is catalytic. Positions 235, 286, and 414 each coordinate Zn(2+).

Belongs to the class-II aminoacyl-tRNA synthetase family. As to quaternary structure, homodimer. Probably interacts with its editing subunit. The cofactor is Zn(2+).

The protein resides in the cytoplasm. The catalysed reaction is tRNA(Thr) + L-threonine + ATP = L-threonyl-tRNA(Thr) + AMP + diphosphate + H(+). Catalyzes the attachment of threonine to tRNA(Thr) in a two-step reaction: L-threonine is first activated by ATP to form Thr-AMP and then transferred to the acceptor end of tRNA(Thr). Also activates L-serine and transfers it to tRNA(Thr) but cannot deacylate incorrectly charged amino acid; unlike most archaea the editing function is found in a freestanding protein. The sequence is that of Threonine--tRNA ligase catalytic subunit from Sulfolobus acidocaldarius (strain ATCC 33909 / DSM 639 / JCM 8929 / NBRC 15157 / NCIMB 11770).